We begin with the raw amino-acid sequence, 513 residues long: Probable metalloreductase AIM14 (513 aa).

7 consecutive transmembrane segments (helical) span residues 22–42 (GYIIFGVSVLYALLLASAHFL), 66–86 (PFWVHTLLWAAIVVGLAFTNV), 103–123 (LAFCLVPLDLALALRPCLLGQ), 138–158 (LIILAGVVHGIGFFVKWTIHH), 166–186 (WANLAGIIVALFSVLLVIVSS), 193–213 (FYSYFYAFHNFTVALFVLLMI), and 219–239 (GVSDFVLLSVALLLFQGASRV). The Ferric oxidoreductase domain occupies 100 to 211 (LGRLAFCLVP…NFTVALFVLL (112 aa)). Residues 240–368 (YNGYSVPGLT…GIPLYEYFDN (129 aa)) enclose the FAD-binding FR-type domain.

This sequence belongs to the ferric reductase (FRE) family. AIM14 subfamily.

The protein resides in the membrane. In terms of biological role, probable cell surface metalloreductase. May be involved in iron or copper homeostasis. This Clavispora lusitaniae (strain ATCC 42720) (Yeast) protein is Probable metalloreductase AIM14 (AIM14).